Reading from the N-terminus, the 388-residue chain is 8-amino-7-oxononanoate synthase (388 aa).

Arg23 contacts substrate. 110 to 111 (GF) serves as a coordination point for pyridoxal 5'-phosphate. Position 135 (His135) interacts with substrate. The pyridoxal 5'-phosphate site is built by Ser181, His209, and Thr235. Residue Lys238 is modified to N6-(pyridoxal phosphate)lysine. Thr352 is a substrate binding site.

The protein belongs to the class-II pyridoxal-phosphate-dependent aminotransferase family. BioF subfamily. In terms of assembly, homodimer. The cofactor is pyridoxal 5'-phosphate.

The enzyme catalyses 6-carboxyhexanoyl-[ACP] + L-alanine + H(+) = (8S)-8-amino-7-oxononanoate + holo-[ACP] + CO2. The protein operates within cofactor biosynthesis; biotin biosynthesis. Catalyzes the decarboxylative condensation of pimeloyl-[acyl-carrier protein] and L-alanine to produce 8-amino-7-oxononanoate (AON), [acyl-carrier protein], and carbon dioxide. This is 8-amino-7-oxononanoate synthase from Sodalis glossinidius (strain morsitans).